The following is a 152-amino-acid chain: Protein-export protein SecB (152 aa).

The protein belongs to the SecB family. In terms of assembly, homotetramer, a dimer of dimers. One homotetramer interacts with 1 SecA dimer.

It localises to the cytoplasm. Functionally, one of the proteins required for the normal export of preproteins out of the cell cytoplasm. It is a molecular chaperone that binds to a subset of precursor proteins, maintaining them in a translocation-competent state. It also specifically binds to its receptor SecA. The polypeptide is Protein-export protein SecB (Rickettsia massiliae (strain Mtu5)).